The following is a 475-amino-acid chain: Aminodeoxychorismate synthase component 1 (475 aa).

It belongs to the anthranilate synthase component I family. In terms of assembly, monomer. Heterodimer consisting of two non-identical subunits: a glutamine amidotransferase subunit (PabA) and a aminodeoxychorismate synthase subunit (PabB). The cofactor is Mg(2+).

It carries out the reaction chorismate + L-glutamine = 4-amino-4-deoxychorismate + L-glutamate. It participates in cofactor biosynthesis; tetrahydrofolate biosynthesis; 4-aminobenzoate from chorismate: step 1/2. Part of a heterodimeric complex that catalyzes the two-step biosynthesis of 4-amino-4-deoxychorismate (ADC), a precursor of p-aminobenzoate (PABA) and tetrahydrofolate. In the first step, a glutamine amidotransferase (PabA) generates ammonia as a substrate that, along with chorismate, is used in the second step, catalyzed by aminodeoxychorismate synthase (PabB) to produce ADC. This is Aminodeoxychorismate synthase component 1 (pabB) from Streptomyces lividans.